The following is an 84-amino-acid chain: Kappa-scoloptoxin(11)-Ssm3a (84 aa).

The N-terminal stretch at 1-16 (MSWMFYSFIVFTLAIK) is a signal peptide.

It belongs to the scoloptoxin-11 family. Post-translationally, contains 2 disulfide bonds. As to expression, expressed by the venom gland.

It localises to the secreted. Inhibits voltage-gated potassium channel currents in DRG neurons. 200 nM of the toxin inhibits current amplitude by only 25% and even at concentrations up to 5 uM, the toxin does not inhibit all potassium currents. In vivo, insects injected with this toxin showed signs of neurotoxicity including twitching, paralysis, and body contraction. The sequence is that of Kappa-scoloptoxin(11)-Ssm3a from Scolopendra mutilans (Chinese red-headed centipede).